The chain runs to 270 residues: Secreted RxLR effector protein 149 (270 aa).

The signal sequence occupies residues 1–21 (MRNGVVLFGLFFIGYSSCVLA). Positions 43–58 (RTLQADDPERILAEER) match the RxLR-dEER motif.

It belongs to the RxLR effector family.

The protein resides in the secreted. The protein localises to the host nucleus. Its subcellular location is the host cytoplasm. Its function is as follows. Secreted effector that completely suppresses the host cell death induced by cell death-inducing proteins. The sequence is that of Secreted RxLR effector protein 149 from Plasmopara viticola (Downy mildew of grapevine).